Here is a 212-residue protein sequence, read N- to C-terminus: Synaptosomal-associated protein 25 (212 aa).

T-SNARE coiled-coil homology domains follow at residues 26–88 (QGVA…LSGM) and 148–210 (DARE…AHQL).

Belongs to the SNAP-25 family. In terms of tissue distribution, exclusively found in brain and ganglia.

It is found in the synapse. Its subcellular location is the synaptosome. In terms of biological role, may play an important role in the synaptic function of specific neuronal systems. Associates with proteins involved in vesicle docking and membrane fusion. The sequence is that of Synaptosomal-associated protein 25 (Snap25) from Drosophila melanogaster (Fruit fly).